The chain runs to 334 residues: Phosphate acyltransferase (334 aa).

This sequence belongs to the PlsX family. In terms of assembly, homodimer. Probably interacts with PlsY.

The protein localises to the cytoplasm. The catalysed reaction is a fatty acyl-[ACP] + phosphate = an acyl phosphate + holo-[ACP]. Its pathway is lipid metabolism; phospholipid metabolism. Catalyzes the reversible formation of acyl-phosphate (acyl-PO(4)) from acyl-[acyl-carrier-protein] (acyl-ACP). This enzyme utilizes acyl-ACP as fatty acyl donor, but not acyl-CoA. The polypeptide is Phosphate acyltransferase (Streptococcus thermophilus (strain ATCC BAA-491 / LMD-9)).